We begin with the raw amino-acid sequence, 151 residues long: MTEAKIVDISSKDIVLREAVVEGYIKLRKETIEKIKNKEVEKGDVITVAKTAGILAAKKTPELIPMCHPIPLEFVDVEIKIEEEGLRVISTVKAHYKTGVEMEALTATSVALLTIWDMVKKYEKDENGQYPYTEIKSIRVINKIKTYDDMK.

Residues 66-68 and 102-103 contribute to the substrate site; these read MCH and ME. Residue Asp-117 is part of the active site.

This sequence belongs to the MoaC family. In terms of assembly, homohexamer; trimer of dimers.

It catalyses the reaction (8S)-3',8-cyclo-7,8-dihydroguanosine 5'-triphosphate = cyclic pyranopterin phosphate + diphosphate. The protein operates within cofactor biosynthesis; molybdopterin biosynthesis. Catalyzes the conversion of (8S)-3',8-cyclo-7,8-dihydroguanosine 5'-triphosphate to cyclic pyranopterin monophosphate (cPMP). This chain is Probable cyclic pyranopterin monophosphate synthase, found in Sulfurisphaera tokodaii (strain DSM 16993 / JCM 10545 / NBRC 100140 / 7) (Sulfolobus tokodaii).